Reading from the N-terminus, the 129-residue chain is Large ribosomal subunit protein bL20 (129 aa).

Belongs to the bacterial ribosomal protein bL20 family.

Functionally, binds directly to 23S ribosomal RNA and is necessary for the in vitro assembly process of the 50S ribosomal subunit. It is not involved in the protein synthesizing functions of that subunit. This Mycobacterium tuberculosis (strain ATCC 25177 / H37Ra) protein is Large ribosomal subunit protein bL20.